The primary structure comprises 153 residues: MTPVQRRRLAWVLLALLASGLATALVAMALERNIAYLYTPSEVLRGDVDAQSRFRLGGMVVKGSFNRPVGSLEARFEVTDGDAQLAVTTSRILPDMFAEGTAVVASGRLQDGTFVADEVLAKHDEKYVPKEVADKMGDAHRKHDVPVTAPEVR.

Residues M1–R8 are Cytoplasmic-facing. Residues L9 to A29 form a helical; Signal-anchor for type II membrane protein membrane-spanning segment. The Extracellular portion of the chain corresponds to L30–R153. The heme site is built by H123 and Y127.

Belongs to the CcmE/CycJ family.

It localises to the cell membrane. Functionally, heme chaperone required for the biogenesis of c-type cytochromes. Transiently binds heme delivered by CcmC and transfers the heme to apo-cytochromes in a process facilitated by CcmF and CcmH. The sequence is that of Cytochrome c-type biogenesis protein CcmE from Stenotrophomonas maltophilia (strain K279a).